The primary structure comprises 878 residues: Longitudinals lacking protein, isoforms N/O/W/X/Y (878 aa).

The BTB domain occupies 32 to 97 (VDCTLAAEGK…MYRGEVNISQ (66 aa)). Disordered regions lie at residues 115-200 (LSDN…SSVL), 228-340 (SSGP…ASAS), and 542-583 (QIVK…QTHA). Low complexity-rich tracts occupy residues 162–175 (SGDVSGSREGSSSP), 228–251 (SSGPAAGTSSQASSTQQQQPLTST), 263–293 (TSSTAAPASGASASAAVQQAHLHQQQAQTTS), 329–340 (NSATGPNPASAS), and 546–569 (QQHQQQHQQQHQHPQQQHQPQQQQ). The C2H2-type 1; degenerate zinc-finger motif lies at 709 to 731 (YACNVCGKTYKIKGSLKRHKNYE). The C2H2-type 2 zinc-finger motif lies at 794–816 (FQCDFCLKWFKRRSHLNRHKKLH). The segment at 826–863 (SKQKPKTTSGQNLSHDANTDDEVATTNPAATEDESNYP) is disordered. Over residues 831-841 (KTTSGQNLSHD) the composition is skewed to polar residues.

In terms of tissue distribution, by stage 11, isoform W, isoform X and isoform Y are expressed throughout the mesoderm, whereas isoform O is expressed in both mesoderm and ectoderm. From stage 15, expression of isoform O expands to all tissues, whereas expression of isoform W, isoform X and isoform Y becomes restricted during later stages; starting from stage 14 to 16, isoform W, isoform X and isoform Y are expressed in muscle. From stages 14 and 15, isoform W and isoform Y are expressed in the gut. For some isoforms, expression is also seen in specific types of cells in the embryo; isoform O is expressed in the ventral furrow at stage 5 and in the dorsal epidermis from stage 7. Isoform Y shows prominent expression in the gonad starting at stage 15.

Its subcellular location is the nucleus. In terms of biological role, putative transcription factor required for axon growth and guidance in the central and peripheral nervous systems. Repels CNS axons away from the midline by promoting the expression of the midline repellent sli and its receptor robo. This chain is Longitudinals lacking protein, isoforms N/O/W/X/Y, found in Drosophila melanogaster (Fruit fly).